The primary structure comprises 154 residues: Myoglobin-2 (154 aa).

The Globin domain occupies 2–148 (GLSDGEWQLV…FRKDIATKYK (147 aa)). His-65 is a binding site for nitrite. O2 is bound at residue His-65. Residue His-94 participates in heme b binding.

Belongs to the globin family. In terms of assembly, monomeric.

The protein localises to the cytoplasm. It is found in the sarcoplasm. The catalysed reaction is Fe(III)-heme b-[protein] + nitric oxide + H2O = Fe(II)-heme b-[protein] + nitrite + 2 H(+). The enzyme catalyses H2O2 + AH2 = A + 2 H2O. Functionally, monomeric heme protein which primary function is to store oxygen and facilitate its diffusion within muscle tissues. Reversibly binds oxygen through a pentacoordinated heme iron and enables its timely and efficient release as needed during periods of heightened demand. Depending on the oxidative conditions of tissues and cells, and in addition to its ability to bind oxygen, it also has a nitrite reductase activity whereby it regulates the production of bioactive nitric oxide. Under stress conditions, like hypoxia and anoxia, it also protects cells against reactive oxygen species thanks to its pseudoperoxidase activity. This chain is Myoglobin-2 (MB2), found in Stenella attenuata (Pantropical spotted dolphin).